The primary structure comprises 62 residues: Large ribosomal subunit protein uL30 (62 aa).

It belongs to the universal ribosomal protein uL30 family. In terms of assembly, part of the 50S ribosomal subunit.

The protein is Large ribosomal subunit protein uL30 of Prosthecochloris aestuarii (strain DSM 271 / SK 413).